Here is a 107-residue protein sequence, read N- to C-terminus: uncharacterized protein (107 aa).

2 helical membrane passes run Trp-5–Val-25 and Ile-42–Phe-62. Positions Ile-82–Asp-92 are enriched in basic and acidic residues. The tract at residues Ile-82–Asp-107 is disordered.

It is found in the cell membrane. This is an uncharacterized protein from Bacillus subtilis (strain 168).